A 188-amino-acid polypeptide reads, in one-letter code: Ribosome-recycling factor (188 aa).

It belongs to the RRF family.

The protein resides in the cytoplasm. In terms of biological role, responsible for the release of ribosomes from messenger RNA at the termination of protein biosynthesis. May increase the efficiency of translation by recycling ribosomes from one round of translation to another. This is Ribosome-recycling factor from Bradyrhizobium diazoefficiens (strain JCM 10833 / BCRC 13528 / IAM 13628 / NBRC 14792 / USDA 110).